Reading from the N-terminus, the 398-residue chain is Delta-aminolevulinic acid dehydratase, chloroplastic (398 aa).

Positions 48 to 87 are disordered; that stretch reads VPEAPPVPPTPASPAGTPVVPSLPIQRRPRRNRRSPALRS. Pro residues predominate over residues 50–59; the sequence is EAPPVPPTPA. A compositionally biased stretch (low complexity) spans 60–69; it reads SPAGTPVVPS. Over residues 74–83 the composition is skewed to basic residues; that stretch reads RRPRRNRRSP. K266 (schiff-base intermediate with substrate) is an active-site residue. 5-aminolevulinate is bound by residues R276 and K288. E304 contacts Mg(2+). Residue K319 is the Schiff-base intermediate with substrate of the active site. Residues S345 and Y384 each contribute to the 5-aminolevulinate site.

It belongs to the ALAD family. As to quaternary structure, homooctamer; formed by oligomerization of dimers. Probably also forms lower oligomers. It depends on Mg(2+) as a cofactor.

The protein resides in the plastid. Its subcellular location is the chloroplast. The catalysed reaction is 2 5-aminolevulinate = porphobilinogen + 2 H2O + H(+). It functions in the pathway porphyrin-containing compound metabolism; protoporphyrin-IX biosynthesis; coproporphyrinogen-III from 5-aminolevulinate: step 1/4. With respect to regulation, activated by magnesium. Inhibited by succinyl acetone. Enzyme activity may depend on the oligomerization state, where the fully active octamer may dissociate and reassemble into less active lower oligomers. In terms of biological role, catalyzes an early step in the biosynthesis of tetrapyrroles. Binds two molecules of 5-aminolevulinate per subunit, each at a distinct site, and catalyzes their condensation to form porphobilinogen. The chain is Delta-aminolevulinic acid dehydratase, chloroplastic (HEMB) from Pisum sativum (Garden pea).